A 1820-amino-acid chain; its full sequence is Afadin (1820 aa).

A Ras-associating 1 domain is found at 39-133 (FHGVMRFYFQ…GRFVLKNEND (95 aa)). A disordered region spans residues 129–196 (KNENDAIPAK…PSQGDDSENS (68 aa)). Residues 146 to 186 (EKQEKEGVIQNFKRTLSKKEKKEKKKKEKEALRQASDKEER) adopt a coiled-coil conformation. The span at 160 to 172 (TLSKKEKKEKKKK) shows a compositional bias: basic residues. Residues 173-189 (EKEALRQASDKEERPSQ) are compositionally biased toward basic and acidic residues. Serine 216, serine 246, and serine 256 each carry phosphoserine. A Ras-associating 2 domain is found at 246–348 (SGGTLRIYAD…LVFQLKRRPP (103 aa)). The segment covering 356 to 371 (KKHVEGKSLKGKDRAD) has biased composition (basic and acidic residues). The interval 356 to 377 (KKHVEGKSLKGKDRADGSGYGS) is disordered. Phosphoserine occurs at positions 391 and 424. The FHA domain occupies 426-492 (TEVGTEKFDD…LQSGMRLQFG (67 aa)). A phosphoserine mark is found at serine 512, serine 557, serine 562, serine 655, serine 1083, serine 1107, serine 1126, serine 1140, serine 1143, serine 1172, serine 1173, serine 1182, and serine 1199. Positions 538–569 (GDVHSGTALPASRSTTRLDSDRVSSASSTAER) are disordered. In terms of domain architecture, Dilute spans 653–908 (DISPTERTHK…IENVVAVAEN (256 aa)). A PDZ domain is found at 1007 to 1093 (IITVTLKKQN…VVTLEVAKQG (87 aa)). Residues 1107–1194 (SPMMQRISDR…GKGPYTSGTA (88 aa)) are disordered. The segment covering 1113–1128 (ISDRRGSGKPRPKSEG) has biased composition (basic and acidic residues). Residues 1132–1143 (YNNSAQNGSPES) are compositionally biased toward polar residues. Residues 1152-1172 (SEPKKLPGDDRLMKNRADHRS) are compositionally biased toward basic and acidic residues. A disordered region spans residues 1203 to 1222 (GNLCTEEQSPPPRPEAYPIP). Threonine 1232 bears the Phosphothreonine mark. Disordered stretches follow at residues 1235–1278 (ASKS…SQEE), 1308–1527 (QSSS…KQQQ), and 1567–1716 (RLQE…LKTQ). Serine 1238 carries the post-translational modification Phosphoserine. A compositionally biased stretch (basic and acidic residues) spans 1252 to 1262 (YEEKPHVHTES). Serine 1275 bears the Phosphoserine mark. The segment covering 1309–1318 (SSSVESSTSS) has biased composition (low complexity). Residues 1325–1337 (SSKSVTPASTLTK) show a composition bias toward polar residues. Serine 1328 bears the Phosphoserine mark. Threonine 1330 carries the phosphothreonine modification. The segment covering 1364-1373 (LPPPPPPPPV) has biased composition (pro residues). Residues 1407–1440 (EWKKREEHQRWYEKEKARLEEERERKRREQERKL) are compositionally biased toward basic and acidic residues. Residues 1410–1446 (KREEHQRWYEKEKARLEEERERKRREQERKLGQMRSQ) adopt a coiled-coil conformation. The segment covering 1443–1457 (MRSQTLNPASFSPLA) has biased composition (polar residues). The span at 1487–1503 (TIERKDLQYITISKEEL) shows a compositional bias: basic and acidic residues. 2 positions are modified to phosphoserine: serine 1499 and serine 1510. Residues 1513–1526 (PWKRDAREKLEKQQ) show a composition bias toward basic and acidic residues. The stretch at 1523–1561 (EKQQQMHIVDMLSKEIHELQNKVDRTAEESDRLRKLMLE) forms a coiled coil. Acidic residues predominate over residues 1576 to 1587 (EDDDEEEDDDVD). Residues 1593–1665 (QRLEAERRAR…SRLEAERRRQ (73 aa)) adopt a coiled-coil conformation. Over residues 1595–1675 (LEAERRARMQ…HEEAARRLLE (81 aa)) the composition is skewed to basic and acidic residues. Residues serine 1694, serine 1719, serine 1770, and serine 1795 each carry the phosphoserine modification. The disordered stretch occupies residues 1734-1820 (EEEDYGPAGP…TELENELNTK (87 aa)). The segment covering 1759-1772 (APREAREKLTRSQD) has biased composition (basic and acidic residues). Over residues 1800–1820 (VSDKVKASRKLTELENELNTK) the composition is skewed to basic and acidic residues. N6-acetyllysine is present on lysine 1803.

As to quaternary structure, homodimer. Interacts with F-actin, nectin and NECTIN3. Essential for the association of nectin and E-cadherin. Isoform 2/s-afadin does not interact with F-actin. Interacts with ZO-1 and occludin, but probably in an indirect manner. Interacts with RIT1, RIT2, NRXN1 and BCR. Interacts with ADAM10; the interaction locks ADAM10 at adherens junctions following ADAM10 recruitment to adherens junctions by TSPAN33. Isoform 1 is expressed only in a restricted set of epithelial structures during early embryogenesis.

It localises to the cell junction. Its subcellular location is the adherens junction. Belongs to an adhesion system, probably together with the E-cadherin-catenin system, which plays a role in the organization of homotypic, interneuronal and heterotypic cell-cell adherens junctions (AJs). Nectin- and actin-filament-binding protein that connects nectin to the actin cytoskeleton. May play a key role in the organization of epithelial structures of the embryonic ectoderm. Essential for the organization of adherens junctions. The sequence is that of Afadin from Mus musculus (Mouse).